The following is an 863-amino-acid chain: Facilitated trehalose transporter Tret1 (863 aa).

A disordered region spans residues 1–208 (MSGRDNRGAG…RIGFQQQKAT (208 aa)). Residues 1–398 (MSGRDNRGAG…VYRPTTNPIY (398 aa)) are Cytoplasmic-facing. Residues 28–46 (KLKEKLTRAGEELGYHRVE) show a composition bias toward basic and acidic residues. Residues 47-59 (SNLSASNTGTSLD) show a composition bias toward polar residues. The segment covering 72–85 (AAPQRHPQQQFPHL) has biased composition (low complexity). Polar residues-rich tracts occupy residues 114–129 (PPQQ…RSSG) and 177–187 (KPQQQGNNKAA). Residues S254, S255, and S256 each carry the phosphoserine modification. Residues 286–307 (VLQGSSTDSDEEGDDAEHKRLI) are disordered. Residues S326 and S328 each carry the phosphoserine modification. The interval 332–354 (FLTSRQNFQQQRSISTDSRKSRR) is disordered. Over residues 336–347 (RQNFQQQRSIST) the composition is skewed to polar residues. A helical transmembrane segment spans residues 399–419 (IWTQVLAALSVSLGSLVVGFA). Residues 420–446 (SAYTSPALVSMTNTNLTSFVVTPQAAS) lie on the Extracellular side of the membrane. N-linked (GlcNAc...) asparagine glycosylation is present at N434. Residues 447 to 467 (WVGGIMPLAGLAGGIAGGPFI) form a helical membrane-spanning segment. The Cytoplasmic portion of the chain corresponds to 468–479 (EYLGRRNTILAT). The helical transmembrane segment at 480–500 (AVPFIISWLLIACAVNVVMVL) threads the bilayer. Topologically, residues 501–503 (CGR) are extracellular. Residues 504-524 (FLAGFCVGIASLSLPVYLGET) form a helical membrane-spanning segment. Residues 525-530 (VQPEVR) are Cytoplasmic-facing. The chain crosses the membrane as a helical span at residues 531–551 (GTLGLLPTAFGNIGILLCFVA). The Extracellular portion of the chain corresponds to 552–558 (GTYMDWS). Residues 559–579 (MLAFLGGTLPVPFLILMFLIP) form a helical membrane-spanning segment. The Cytoplasmic portion of the chain corresponds to 580–642 (ETPRWYVSRG…ELLKRSNLKP (63 aa)). The chain crosses the membrane as a helical span at residues 643–663 (LSISLGLMFFQQLSGINAVIF). The Extracellular portion of the chain corresponds to 664–679 (YTVQIFQDAGSTIDGN). A helical membrane pass occupies residues 680–700 (VCTIIVGVVNFMATFIATVLI). Topologically, residues 701-706 (DRAGRK) are cytoplasmic. Residues 707–727 (ILLYVSNVAMILTLFVLGGFF) form a helical membrane-spanning segment. The Extracellular segment spans residues 728-746 (YCKSTGMDTSNVGWLPLSC). The chain crosses the membrane as a helical span at residues 747–767 (FVVYILGFSLGFGPIPWLMMG). Topologically, residues 768–773 (EILPAK) are cytoplasmic. Residues 774-794 (IRGSAASVATAFNWSCTFVVT) form a helical membrane-spanning segment. Residues 795 to 807 (KSFQDMIDVMGAH) lie on the Extracellular side of the membrane. Residues 808 to 828 (GAFWMFGAICFVGLFFVIFYV) traverse the membrane as a helical segment. Residues 829 to 863 (PETQGKTLEDIERKMMGRVRRMSSVANIKPLSFNM) lie on the Cytoplasmic side of the membrane. 2 positions are modified to phosphoserine: S851 and S852.

Belongs to the major facilitator superfamily. Sugar transporter (TC 2.A.1.1) family. Trehalose transporter subfamily.

It is found in the cell membrane. Low-capacity facilitative transporter for trehalose. Does not transport maltose, sucrose or lactose. Mediates the bidirectional transfer of trehalose. Responsible for the transport of trehalose synthesized in the fat body and the incorporation of trehalose into other tissues that require a carbon source, thereby regulating trehalose levels in the hemolymph. This Drosophila mojavensis (Fruit fly) protein is Facilitated trehalose transporter Tret1.